We begin with the raw amino-acid sequence, 200 residues long: Integrin beta-1-binding protein 1 (200 aa).

The segment covering 1–10 has biased composition (basic residues); the sequence is MFRKGKKRHS. Residues 1–55 are disordered; it reads MFRKGKKRHSSSSSQSSEISTKSKSVDSSLGGLSRSSTVASLDTDSTKSSGQSNS. The Nuclear localization signal motif lies at 6 to 7; sequence KK. Residues 11–29 are compositionally biased toward low complexity; it reads SSSSQSSEISTKSKSVDSS. Over residues 34–55 the composition is skewed to polar residues; the sequence is SRSSTVASLDTDSTKSSGQSNS. The residue at position 38 (threonine 38) is a Phosphothreonine; by CaMK2. Serine 41 carries the post-translational modification Phosphoserine. Positions 58–200 constitute a PID domain; that stretch reads DTCAEFRIKY…FDSVLTSDKS (143 aa). The segment at 136-139 is interaction with KRIT1; sequence YLII. The interval 139-141 is interaction with ITGB1; sequence IRM.

In terms of assembly, found in a complex, at least composed of ITGB1BP1, KRIT1 and RAP1A. Interacts (via C-terminal region) with ITGB1 (via C-terminal cytoplasmic tail); the interaction prevents talin TLN1 binding to ITGB1 and KRIT1 and ITGB1 compete for the same binding site. Interacts with KRIT1 (via N-terminal NPXY motif); the interaction induces the opening conformation of KRIT1 and KRIT1 and ITGB1 compete for the same binding site. Isoform 2 does not interact with ITGB1. Interacts with CDC42 (GTP- or GDP-bound form); the interaction is increased with the CDC42-membrane bound forms and prevents both CDC42 activation and cell spreading. Interacts (via C-terminal domain region) with NME2. Interacts with FERMT2 and RAC1. Interacts (via N-terminus and PTB domain) with ROCK1. Post-translationally, phosphorylation at Thr-38 seems to enhance integrin alpha5beta1-mediated cell adhesion. The degree of phosphorylation is regulated by integrin-dependent cell-matrix interaction. In terms of tissue distribution, expressed in the brain.

The protein localises to the nucleus. It is found in the cytoplasm. The protein resides in the cytoskeleton. Its subcellular location is the cell membrane. It localises to the cell projection. The protein localises to the lamellipodium. It is found in the ruffle. In terms of biological role, key regulator of the integrin-mediated cell-matrix interaction signaling by binding to the ITGB1 cytoplasmic tail and preventing the activation of integrin alpha-5/beta-1 (heterodimer of ITGA5 and ITGB1) by talin or FERMT1. Plays a role in cell proliferation, differentiation, spreading, adhesion and migration in the context of mineralization and bone development and angiogenesis. Stimulates cellular proliferation in a fibronectin-dependent manner. Involved in the regulation of beta-1 integrin-containing focal adhesion (FA) site dynamics by controlling its assembly rate during cell adhesion; inhibits beta-1 integrin clustering within FA by directly competing with talin TLN1, and hence stimulates osteoblast spreading and migration in a fibronectin- and/or collagen-dependent manner. Acts as a guanine nucleotide dissociation inhibitor (GDI) by regulating Rho family GTPases during integrin-mediated cell matrix adhesion; reduces the level of active GTP-bound form of both CDC42 and RAC1 GTPases upon cell adhesion to fibronectin. Stimulates the release of active CDC42 from the membranes to maintain it in an inactive cytoplasmic pool. Participates in the translocation of the Rho-associated protein kinase ROCK1 to membrane ruffles at cell leading edges of the cell membrane, leading to an increase of myoblast cell migration on laminin. Plays a role in bone mineralization at a late stage of osteoblast differentiation; modulates the dynamic formation of focal adhesions into fibrillar adhesions, which are adhesive structures responsible for fibronectin deposition and fibrillogenesis. Plays a role in blood vessel development; acts as a negative regulator of angiogenesis by attenuating endothelial cell proliferation and migration, lumen formation and sprouting angiogenesis by promoting AKT phosphorylation and inhibiting ERK1/2 phosphorylation through activation of the Notch signaling pathway. Promotes transcriptional activity of the MYC promoter. The protein is Integrin beta-1-binding protein 1 (Itgb1bp1) of Mus musculus (Mouse).